The sequence spans 950 residues: Glycine dehydrogenase (decarboxylating) (950 aa).

Residue K698 is modified to N6-(pyridoxal phosphate)lysine.

It belongs to the GcvP family. The glycine cleavage system is composed of four proteins: P, T, L and H. Pyridoxal 5'-phosphate is required as a cofactor.

The enzyme catalyses N(6)-[(R)-lipoyl]-L-lysyl-[glycine-cleavage complex H protein] + glycine + H(+) = N(6)-[(R)-S(8)-aminomethyldihydrolipoyl]-L-lysyl-[glycine-cleavage complex H protein] + CO2. Its function is as follows. The glycine cleavage system catalyzes the degradation of glycine. The P protein binds the alpha-amino group of glycine through its pyridoxal phosphate cofactor; CO(2) is released and the remaining methylamine moiety is then transferred to the lipoamide cofactor of the H protein. The protein is Glycine dehydrogenase (decarboxylating) of Neisseria meningitidis serogroup C (strain 053442).